The sequence spans 586 residues: Phosphomethylpyrimidine synthase (586 aa).

The tract at residues 1 to 58 (MKQSVSAEQIELKSSLPGSKKVYVDGTREGMKVPMREIEQSDTNGVQNPPIRVYDTSG) is disordered. The span at 22 to 39 (VYVDGTREGMKVPMREIE) shows a compositional bias: basic and acidic residues. Residues Asn-193, Met-222, Tyr-251, His-287, 307–309 (SRG), 348–351 (DGLR), and Glu-387 each bind substrate. Position 391 (His-391) interacts with Zn(2+). Tyr-414 contributes to the substrate binding site. Residue His-455 participates in Zn(2+) binding. [4Fe-4S] cluster is bound by residues Cys-535, Cys-538, and Cys-543.

This sequence belongs to the ThiC family. [4Fe-4S] cluster serves as cofactor.

It catalyses the reaction 5-amino-1-(5-phospho-beta-D-ribosyl)imidazole + S-adenosyl-L-methionine = 4-amino-2-methyl-5-(phosphooxymethyl)pyrimidine + CO + 5'-deoxyadenosine + formate + L-methionine + 3 H(+). It participates in cofactor biosynthesis; thiamine diphosphate biosynthesis. Functionally, catalyzes the synthesis of the hydroxymethylpyrimidine phosphate (HMP-P) moiety of thiamine from aminoimidazole ribotide (AIR) in a radical S-adenosyl-L-methionine (SAM)-dependent reaction. In Bacillus mycoides (strain KBAB4) (Bacillus weihenstephanensis), this protein is Phosphomethylpyrimidine synthase.